The sequence spans 423 residues: Torsin-4A (423 aa).

Residues 47-68 (PGGGPDVGTGAPRPGCSPRAPR) form a disordered region. Residues Ser63 and Ser81 each carry the phosphoserine modification. Thr89 bears the Phosphothreonine mark. The residue at position 106 (Ser106) is a Phosphoserine. Residues 122–138 (CLLLLVAIVGFQVLNAI) form a helical membrane-spanning segment. 194–201 (GPSGVGKS) is an ATP binding site.

The protein belongs to the ClpA/ClpB family. Torsin subfamily.

The protein localises to the membrane. This is Torsin-4A (TOR4A) from Homo sapiens (Human).